The sequence spans 297 residues: Probable replication protein rep (297 aa).

It belongs to the initiator RepB protein family.

This Bifidobacterium longum (strain NCC 2705) protein is Probable replication protein rep (rep).